A 358-amino-acid polypeptide reads, in one-letter code: MNIRYLARNNILTLKPYQSARKCTHSGNIWLNANEFPIAPDYQFRYKKIHRYPTCQPQEVINNYAYYAGVRSDQILVSRGADESIELLMKVFCNPGKDVIIFCPPTYGMYKTTAEILGINYRIIPKKENWQLDLASIKSQLNNVKLIYICNPNNPTGNIIHLNSLKKLLKIIQNRALLVTDEAYIDFCPDASLVRWLPMYPHLVILRTLSKAFALAGLRCGFTLANPEIIKLLEKVIAPYPLSTPVIDIAEQALTPISIQYTQNRIATVNTNRNILITGLKKCSCVQQVFNSHANYVLVKFNPKYQVFKTLLHQGIVLRDQSNQPGLVNCLRITVGTYNECKHVVSVLKKLHVASLSI.

N6-(pyridoxal phosphate)lysine is present on Lys211.

The protein belongs to the class-II pyridoxal-phosphate-dependent aminotransferase family. Histidinol-phosphate aminotransferase subfamily. As to quaternary structure, homodimer. Requires pyridoxal 5'-phosphate as cofactor.

The enzyme catalyses L-histidinol phosphate + 2-oxoglutarate = 3-(imidazol-4-yl)-2-oxopropyl phosphate + L-glutamate. It participates in amino-acid biosynthesis; L-histidine biosynthesis; L-histidine from 5-phospho-alpha-D-ribose 1-diphosphate: step 7/9. The sequence is that of Histidinol-phosphate aminotransferase from Blochmanniella pennsylvanica (strain BPEN).